A 502-amino-acid chain; its full sequence is Probable cytosol aminopeptidase 2 (502 aa).

2 residues coordinate Mn(2+): Lys269 and Asp274. Lys281 is a catalytic residue. Mn(2+) is bound by residues Asp292, Asp351, and Glu353. Residue Arg355 is part of the active site.

Belongs to the peptidase M17 family. It depends on Mn(2+) as a cofactor.

It localises to the cytoplasm. It catalyses the reaction Release of an N-terminal amino acid, Xaa-|-Yaa-, in which Xaa is preferably Leu, but may be other amino acids including Pro although not Arg or Lys, and Yaa may be Pro. Amino acid amides and methyl esters are also readily hydrolyzed, but rates on arylamides are exceedingly low.. The enzyme catalyses Release of an N-terminal amino acid, preferentially leucine, but not glutamic or aspartic acids.. Functionally, presumably involved in the processing and regular turnover of intracellular proteins. Catalyzes the removal of unsubstituted N-terminal amino acids from various peptides. The protein is Probable cytosol aminopeptidase 2 (pepA2) of Shewanella oneidensis (strain ATCC 700550 / JCM 31522 / CIP 106686 / LMG 19005 / NCIMB 14063 / MR-1).